Here is a 427-residue protein sequence, read N- to C-terminus: Glutamate-1-semialdehyde 2,1-aminomutase (427 aa).

Position 268 is an N6-(pyridoxal phosphate)lysine (lysine 268).

It belongs to the class-III pyridoxal-phosphate-dependent aminotransferase family. HemL subfamily. Requires pyridoxal 5'-phosphate as cofactor.

The protein resides in the cytoplasm. It carries out the reaction (S)-4-amino-5-oxopentanoate = 5-aminolevulinate. It participates in porphyrin-containing compound metabolism; protoporphyrin-IX biosynthesis; 5-aminolevulinate from L-glutamyl-tRNA(Glu): step 2/2. The sequence is that of Glutamate-1-semialdehyde 2,1-aminomutase from Methanococcus maripaludis (strain DSM 14266 / JCM 13030 / NBRC 101832 / S2 / LL).